The following is a 351-amino-acid chain: Spermidine/putrescine import ATP-binding protein PotA (351 aa).

Residues 6-236 form the ABC transporter domain; that stretch reads LELRNVTKEY…PENAWVANFI (231 aa). ATP is bound at residue 38–45; the sequence is GPSGCGKT.

It belongs to the ABC transporter superfamily. Spermidine/putrescine importer (TC 3.A.1.11.1) family. As to quaternary structure, the complex is composed of two ATP-binding proteins (PotA), two transmembrane proteins (PotB and PotC) and a solute-binding protein (PotD).

It localises to the cell membrane. It carries out the reaction ATP + H2O + polyamine-[polyamine-binding protein]Side 1 = ADP + phosphate + polyamineSide 2 + [polyamine-binding protein]Side 1.. Part of the ABC transporter complex PotABCD involved in spermidine/putrescine import. Responsible for energy coupling to the transport system. In Mycoplasma capricolum subsp. capricolum (strain California kid / ATCC 27343 / NCTC 10154), this protein is Spermidine/putrescine import ATP-binding protein PotA.